A 239-amino-acid polypeptide reads, in one-letter code: MNIGVIFAGGVGRRMNTKGKPKQFLEVHGKPIIVHTIDIFQNTEAIDAVVVVCVSDWLDYMNNLVERFNLTKVKAVVAGGETGQMSIFKGLEAAEQLATDDAVVLIHDGVRPLINEEVINANIQSVKETGSAVTSVRAKETVVLVNDSSKISEVVDRTRSFIAKAPQSFYLSDILSIERDAISKGITDAIDSSTLMGMYNRELTIVEGPYENIKITTPDDFYMFKALYDARENEQIYGM.

CTP-binding positions include 7–10 and 80–86; these read FAGG and GETGQMS.

This sequence belongs to the IspD/TarI cytidylyltransferase family. TarI subfamily.

The catalysed reaction is D-ribitol 5-phosphate + CTP + H(+) = CDP-L-ribitol + diphosphate. The protein operates within cell wall biogenesis; poly(ribitol phosphate) teichoic acid biosynthesis. In terms of biological role, catalyzes the transfer of the cytidylyl group of CTP to D-ribitol 5-phosphate. In Streptococcus agalactiae serotype Ia (strain ATCC 27591 / A909 / CDC SS700), this protein is Ribitol-5-phosphate cytidylyltransferase.